We begin with the raw amino-acid sequence, 334 residues long: Glyceraldehyde-3-phosphate dehydrogenase (334 aa).

Residues 12 to 13 (TI) and G111 each bind NAD(+). 140–142 (SCN) contributes to the D-glyceraldehyde 3-phosphate binding site. C141 acts as the Nucleophile in catalysis. Residue R167 coordinates NAD(+). Residue 192-193 (HG) coordinates D-glyceraldehyde 3-phosphate. Q298 is an NAD(+) binding site.

It belongs to the glyceraldehyde-3-phosphate dehydrogenase family. In terms of assembly, homotetramer.

The protein localises to the cytoplasm. The catalysed reaction is D-glyceraldehyde 3-phosphate + phosphate + NADP(+) = (2R)-3-phospho-glyceroyl phosphate + NADPH + H(+). It carries out the reaction D-glyceraldehyde 3-phosphate + phosphate + NAD(+) = (2R)-3-phospho-glyceroyl phosphate + NADH + H(+). Its pathway is carbohydrate degradation; glycolysis; pyruvate from D-glyceraldehyde 3-phosphate: step 1/5. This is Glyceraldehyde-3-phosphate dehydrogenase from Thermococcus kodakarensis (strain ATCC BAA-918 / JCM 12380 / KOD1) (Pyrococcus kodakaraensis (strain KOD1)).